A 300-amino-acid chain; its full sequence is Bidirectional sugar transporter SWEET12 (300 aa).

At 1–4 (MVQA) the chain is on the extracellular side. Residues 5–25 (LVFAVGIVGNILSFLVILAPV) traverse the membrane as a helical segment. The region spanning 8–92 (AVGIVGNILS…TVYLLYAPRQ (85 aa)) is the MtN3/slv 1 domain. Residues 26–38 (PTFYRVYKKKSTE) are Cytoplasmic-facing. A helical membrane pass occupies residues 39–61 (SFQSVPYAVALLSAMLWLYYALL). Over 62–67 (TSDLLL) the chain is Extracellular. Residues 68–88 (LSINSIGCLVESLYLTVYLLY) traverse the membrane as a helical segment. Residues 89-99 (APRQAMAFTLK) are Cytoplasmic-facing. The helical transmembrane segment at 100-120 (LVCAMNLALFAAVVAALQLLV) threads the bilayer. Topologically, residues 121 to 128 (KATDRRVT) are extracellular. The chain crosses the membrane as a helical span at residues 129–149 (LAGGIGASFALAVFVAPLTII). Positions 131 to 213 (GGIGASFALA…VLYVVYKNPK (83 aa)) constitute a MtN3/slv 2 domain. Topologically, residues 150–162 (RQVIRTKSVEFMP) are cytoplasmic. A helical transmembrane segment spans residues 163 to 183 (FWLSFFLTLSAVVWFFYGLLM). Over 184 to 185 (KD) the chain is Extracellular. A helical membrane pass occupies residues 186 to 206 (FFVATPNVLGLLFGLAQMVLY). Residues 207 to 300 (VVYKNPKKNS…PPALPAVEVA (94 aa)) lie on the Cytoplasmic side of the membrane. Residues 256–300 (ADLEAAAPATPQRPADDDAIDHRSVVVDIPPPPQPPPALPAVEVA) are disordered. Residues 269–280 (PADDDAIDHRSV) are compositionally biased toward basic and acidic residues. Positions 284–294 (IPPPPQPPPAL) are enriched in pro residues.

This sequence belongs to the SWEET sugar transporter family. As to quaternary structure, forms homooligomers and/or heterooligomers.

The protein localises to the cell membrane. Its function is as follows. Mediates both low-affinity uptake and efflux of sugar across the plasma membrane. In terms of biological role, confers blight susceptibility. Confers TAL effector-mediated susceptibility to Xanthomonas oryzae pv. oryzae. This chain is Bidirectional sugar transporter SWEET12 (SWEET12), found in Oryza sativa subsp. japonica (Rice).